Reading from the N-terminus, the 649-residue chain is UvrABC system protein B (649 aa).

Residues 25–178 (EHYKDGIKEQ…EDILKELVKM (154 aa)) form the Helicase ATP-binding domain. 38 to 45 (GVTGSGKT) contacts ATP. A Beta-hairpin motif is present at residues 91 to 114 (YYDYYQPEAYVAQTDTFIDKESAI). Positions 428–594 (QVDDLLGEIR…SVVRKLKDKK (167 aa)) constitute a Helicase C-terminal domain. Residues 614-649 (DEIIKELEKEMKQAAKDLNFEKAAKLRDRIMELKEE) enclose the UVR domain.

Belongs to the UvrB family. Forms a heterotetramer with UvrA during the search for lesions. Interacts with UvrC in an incision complex.

The protein localises to the cytoplasm. The UvrABC repair system catalyzes the recognition and processing of DNA lesions. A damage recognition complex composed of 2 UvrA and 2 UvrB subunits scans DNA for abnormalities. Upon binding of the UvrA(2)B(2) complex to a putative damaged site, the DNA wraps around one UvrB monomer. DNA wrap is dependent on ATP binding by UvrB and probably causes local melting of the DNA helix, facilitating insertion of UvrB beta-hairpin between the DNA strands. Then UvrB probes one DNA strand for the presence of a lesion. If a lesion is found the UvrA subunits dissociate and the UvrB-DNA preincision complex is formed. This complex is subsequently bound by UvrC and the second UvrB is released. If no lesion is found, the DNA wraps around the other UvrB subunit that will check the other stand for damage. In Methanosphaera stadtmanae (strain ATCC 43021 / DSM 3091 / JCM 11832 / MCB-3), this protein is UvrABC system protein B.